We begin with the raw amino-acid sequence, 149 residues long: Deoxyuridine 5'-triphosphate nucleotidohydrolase (149 aa).

Substrate-binding positions include 68–70, Asn81, 85–87, and Met95; these read RSG and LID.

This sequence belongs to the dUTPase family. The cofactor is Mg(2+).

It catalyses the reaction dUTP + H2O = dUMP + diphosphate + H(+). Its pathway is pyrimidine metabolism; dUMP biosynthesis; dUMP from dCTP (dUTP route): step 2/2. Functionally, this enzyme is involved in nucleotide metabolism: it produces dUMP, the immediate precursor of thymidine nucleotides and it decreases the intracellular concentration of dUTP so that uracil cannot be incorporated into DNA. The chain is Deoxyuridine 5'-triphosphate nucleotidohydrolase from Bordetella pertussis (strain Tohama I / ATCC BAA-589 / NCTC 13251).